A 360-amino-acid polypeptide reads, in one-letter code: 3-isopropylmalate dehydrogenase (360 aa).

An NAD(+)-binding site is contributed by 76–89; sequence GPKWDTIERDIRPE. Substrate-binding residues include Arg-96, Arg-106, Arg-134, and Asp-224. Asp-224, Asp-248, and Asp-252 together coordinate Mg(2+). 282–294 is a binding site for NAD(+); the sequence is GSAPDIAGKGIAN.

This sequence belongs to the isocitrate and isopropylmalate dehydrogenases family. LeuB type 1 subfamily. As to quaternary structure, homodimer. The cofactor is Mg(2+). Requires Mn(2+) as cofactor.

It is found in the cytoplasm. It carries out the reaction (2R,3S)-3-isopropylmalate + NAD(+) = 4-methyl-2-oxopentanoate + CO2 + NADH. Its pathway is amino-acid biosynthesis; L-leucine biosynthesis; L-leucine from 3-methyl-2-oxobutanoate: step 3/4. In terms of biological role, catalyzes the oxidation of 3-carboxy-2-hydroxy-4-methylpentanoate (3-isopropylmalate) to 3-carboxy-4-methyl-2-oxopentanoate. The product decarboxylates to 4-methyl-2 oxopentanoate. The polypeptide is 3-isopropylmalate dehydrogenase (Pseudomonas fluorescens (strain Pf0-1)).